Consider the following 276-residue polypeptide: F420-dependent methylenetetrahydromethanopterin dehydrogenase (276 aa).

Residues 253–276 (TVLRTPHGKEGKTLSKKDLLAKPE) are disordered. Basic and acidic residues predominate over residues 259–276 (HGKEGKTLSKKDLLAKPE).

The protein belongs to the MTD family. As to quaternary structure, found to be tightly associated with methyl-coenzyme M methylreductase.

The catalysed reaction is 5,10-methylenetetrahydromethanopterin + oxidized coenzyme F420-(gamma-L-Glu)(n) + 2 H(+) = 5,10-methenyl-5,6,7,8-tetrahydromethanopterin + reduced coenzyme F420-(gamma-L-Glu)(n). It participates in one-carbon metabolism; methanogenesis from CO(2); 5,10-methylene-5,6,7,8-tetrahydromethanopterin from 5,10-methenyl-5,6,7,8-tetrahydromethanopterin (coenzyme F420 route): step 1/1. With respect to regulation, activity requires salt; 100 mM sodium or potassium salts of chloride, phosphate or sulfate are equally effective. Not inactivated by O(2). Inhibited by hydrogen-producing 5,10-methenyltetrahydromethanopterin hydrogenase which has a higher affinity for their shared substrate. Enzyme is O(2)-stable and strictly dependent on coenzyme F420. Its function is as follows. Catalyzes the reversible reduction of methenyl-H(4)MPT(+) to methylene-H(4)MPT. This chain is F420-dependent methylenetetrahydromethanopterin dehydrogenase, found in Methanothermobacter marburgensis (strain ATCC BAA-927 / DSM 2133 / JCM 14651 / NBRC 100331 / OCM 82 / Marburg) (Methanobacterium thermoautotrophicum).